We begin with the raw amino-acid sequence, 84 residues long: Acetylcholine receptor subunit alpha (84 aa).

2 disulfides stabilise this stretch: cysteine 7-cysteine 21 and cysteine 71-cysteine 72. Asparagine 20 is a glycosylation site (N-linked (GlcNAc...) asparagine).

The protein belongs to the ligand-gated ion channel (TC 1.A.9) family. Acetylcholine receptor (TC 1.A.9.1) subfamily. Alpha-1/CHRNA1 sub-subfamily. One of the alpha chains that assemble within the acetylcholine receptor, a pentamer of two alpha chains, a beta, a delta, and a gamma (in immature muscle) or epsilon (in mature muscle) chains. The muscle heteropentamer composed of alpha-1, beta-1, delta, epsilon subunits interacts with the alpha-conotoxin ImII.

It is found in the postsynaptic cell membrane. The protein resides in the cell membrane. The catalysed reaction is K(+)(in) = K(+)(out). The enzyme catalyses Na(+)(in) = Na(+)(out). Its function is as follows. Upon acetylcholine binding, the AChR responds by an extensive change in conformation that affects all subunits and leads to opening of an ion-conducting channel across the plasma membrane. This is Acetylcholine receptor subunit alpha (CHRNA1) from Crocidura russula (Greater white-toothed shrew).